A 129-amino-acid polypeptide reads, in one-letter code: Fluoride-specific ion channel FluC 2 (129 aa).

4 helical membrane passes run 4 to 24 (LDVM…WWIG), 39 to 59 (TFLI…LFGV), 65 to 85 (YGTM…TTFS), and 104 to 124 (VFYL…GAML). Positions 79 and 82 each coordinate Na(+).

The protein belongs to the fluoride channel Fluc/FEX (TC 1.A.43) family.

The protein localises to the cell inner membrane. It carries out the reaction fluoride(in) = fluoride(out). Na(+) is not transported, but it plays an essential structural role and its presence is essential for fluoride channel function. Fluoride-specific ion channel. Important for reducing fluoride concentration in the cell, thus reducing its toxicity. This Brucella abortus biovar 1 (strain 9-941) protein is Fluoride-specific ion channel FluC 2.